A 170-amino-acid polypeptide reads, in one-letter code: Large ribosomal subunit protein uL16 (170 aa).

The protein belongs to the universal ribosomal protein uL16 family.

The polypeptide is Large ribosomal subunit protein uL16 (Methanoculleus marisnigri (strain ATCC 35101 / DSM 1498 / JR1)).